The following is a 316-amino-acid chain: 4-hydroxy-3-methylbut-2-enyl diphosphate reductase (316 aa).

C12 contributes to the [4Fe-4S] cluster binding site. Residues H41 and H74 each coordinate (2E)-4-hydroxy-3-methylbut-2-enyl diphosphate. The dimethylallyl diphosphate site is built by H41 and H74. Isopentenyl diphosphate contacts are provided by H41 and H74. C96 lines the [4Fe-4S] cluster pocket. Position 124 (H124) interacts with (2E)-4-hydroxy-3-methylbut-2-enyl diphosphate. H124 is a dimethylallyl diphosphate binding site. Position 124 (H124) interacts with isopentenyl diphosphate. The active-site Proton donor is the E126. T167 serves as a coordination point for (2E)-4-hydroxy-3-methylbut-2-enyl diphosphate. Residue C197 participates in [4Fe-4S] cluster binding. 4 residues coordinate (2E)-4-hydroxy-3-methylbut-2-enyl diphosphate: S225, S226, N227, and S269. Dimethylallyl diphosphate-binding residues include S225, S226, N227, and S269. Isopentenyl diphosphate is bound by residues S225, S226, N227, and S269.

Belongs to the IspH family. As to quaternary structure, homodimer. [4Fe-4S] cluster is required as a cofactor.

It carries out the reaction isopentenyl diphosphate + 2 oxidized [2Fe-2S]-[ferredoxin] + H2O = (2E)-4-hydroxy-3-methylbut-2-enyl diphosphate + 2 reduced [2Fe-2S]-[ferredoxin] + 2 H(+). The enzyme catalyses dimethylallyl diphosphate + 2 oxidized [2Fe-2S]-[ferredoxin] + H2O = (2E)-4-hydroxy-3-methylbut-2-enyl diphosphate + 2 reduced [2Fe-2S]-[ferredoxin] + 2 H(+). It participates in isoprenoid biosynthesis; dimethylallyl diphosphate biosynthesis; dimethylallyl diphosphate from (2E)-4-hydroxy-3-methylbutenyl diphosphate: step 1/1. Its pathway is isoprenoid biosynthesis; isopentenyl diphosphate biosynthesis via DXP pathway; isopentenyl diphosphate from 1-deoxy-D-xylulose 5-phosphate: step 6/6. In terms of biological role, catalyzes the conversion of 1-hydroxy-2-methyl-2-(E)-butenyl 4-diphosphate (HMBPP) into a mixture of isopentenyl diphosphate (IPP) and dimethylallyl diphosphate (DMAPP). Acts in the terminal step of the DOXP/MEP pathway for isoprenoid precursor biosynthesis. The sequence is that of 4-hydroxy-3-methylbut-2-enyl diphosphate reductase from Sodalis glossinidius (strain morsitans).